Consider the following 433-residue polypeptide: Probable non-inhibitory serpin-Z5 (433 aa).

The span at 1–12 shows a compositional bias: basic and acidic residues; it reads MEPKEKKQKLDT. The segment at 1–43 is disordered; it reads MEPKEKKQKLDTSEVASPSLSKTHLKKKKTKKQKIRKSQEITS. Positions 23–36 are enriched in basic residues; it reads THLKKKKTKKQKIR. The interval 380–404 is RCL; it reads GTEAVTFTAFRSAYLGCALVKPIDF.

This sequence belongs to the serpin family. In terms of tissue distribution, weakly expressed during seedling development.

This Arabidopsis thaliana (Mouse-ear cress) protein is Probable non-inhibitory serpin-Z5.